Reading from the N-terminus, the 431-residue chain is Glutamate-1-semialdehyde 2,1-aminomutase (431 aa).

N6-(pyridoxal phosphate)lysine is present on Lys265.

It belongs to the class-III pyridoxal-phosphate-dependent aminotransferase family. HemL subfamily. Homodimer. The cofactor is pyridoxal 5'-phosphate.

It is found in the cytoplasm. It catalyses the reaction (S)-4-amino-5-oxopentanoate = 5-aminolevulinate. The protein operates within porphyrin-containing compound metabolism; protoporphyrin-IX biosynthesis; 5-aminolevulinate from L-glutamyl-tRNA(Glu): step 2/2. In Vibrio atlanticus (strain LGP32) (Vibrio splendidus (strain Mel32)), this protein is Glutamate-1-semialdehyde 2,1-aminomutase.